Consider the following 318-residue polypeptide: UDP-3-O-acylglucosamine N-acyltransferase 1 (318 aa).

His230 acts as the Proton acceptor in catalysis.

This sequence belongs to the transferase hexapeptide repeat family. LpxD subfamily. Homotrimer.

The catalysed reaction is a UDP-3-O-[(3R)-3-hydroxyacyl]-alpha-D-glucosamine + a (3R)-hydroxyacyl-[ACP] = a UDP-2-N,3-O-bis[(3R)-3-hydroxyacyl]-alpha-D-glucosamine + holo-[ACP] + H(+). Its pathway is bacterial outer membrane biogenesis; LPS lipid A biosynthesis. Its function is as follows. Catalyzes the N-acylation of UDP-3-O-acylglucosamine using 3-hydroxyacyl-ACP as the acyl donor. Is involved in the biosynthesis of lipid A, a phosphorylated glycolipid that anchors the lipopolysaccharide to the outer membrane of the cell. In Sulfurimonas denitrificans (strain ATCC 33889 / DSM 1251) (Thiomicrospira denitrificans (strain ATCC 33889 / DSM 1251)), this protein is UDP-3-O-acylglucosamine N-acyltransferase 1.